Here is a 154-residue protein sequence, read N- to C-terminus: Ribosomal RNA large subunit methyltransferase H (154 aa).

The S-adenosyl-L-methionine site is built by leucine 70 and glycine 102.

Belongs to the RNA methyltransferase RlmH family. As to quaternary structure, homodimer.

The protein resides in the cytoplasm. The catalysed reaction is pseudouridine(1915) in 23S rRNA + S-adenosyl-L-methionine = N(3)-methylpseudouridine(1915) in 23S rRNA + S-adenosyl-L-homocysteine + H(+). Specifically methylates the pseudouridine at position 1915 (m3Psi1915) in 23S rRNA. The sequence is that of Ribosomal RNA large subunit methyltransferase H from Hyphomonas neptunium (strain ATCC 15444).